The sequence spans 385 residues: Polyketide synthase 2 (385 aa).

Cysteine 157 is an active-site residue.

It belongs to the thiolase-like superfamily. Chalcone/stilbene synthases family. In terms of tissue distribution, expressed in leaves and glandular trichomes.

Its subcellular location is the cytoplasm. Functionally, polyketide synthase responsible for the biosynthesis of secondary metabolites. The protein is Polyketide synthase 2 (PKSG2) of Cannabis sativa (Hemp).